A 675-amino-acid chain; its full sequence is LVRKRCERLYEGRMGVWNGSLKAELRPAEIVLAKKTRSFTAAPLDTLLGAKVCVDDFNNWFYSKNMECPWTVGMTKFYKGWDEFLRKFPDGWVYCDADGSQFDSSLTPYLLNAVLSIRLWAMEDWDIGEQMLKNLYGEITYTPILTPDGTIVKKFKGNNSGQPSTVVDNTLMVLITMYYALRKAGYDTKTQEDMCVFYINGDDLCIAIHPDHEHVLDSFSSSFAELGLKYDFAQRHRNKQNLWFMSHRGILIDDIYIPKLEPERIVAILEWDKSKLPEHRLEAITAAMIESWGHGDLTHQIRRFYQWVLEQAPFNELAKQGRAPYVSEVGLRRLYTSERGSMDELEAYIDKYFERERGDSPELLVYHESRSTDDYQLVCSNNTHVFHQSKNEAVDAGLNEKLKEKENQKEKEKEKQKEKEKDGASDGNDVSTSTKTGERDRDVNVGTSGTFTVPRIKSFTDKMVLPRIKGKTVLNLNHLLQYNPQQIDISNTRATHSQFEKWYEGVRNDYGLNDNEMQVMLNGLMVWCIENGTSPDISGVWVMMDGETQVDYPIKPLIEHATPSFRQIMAHFSNAAEAYIAKRNATERYMPRYGIKRNLTDISLARYAFDFYEVNSKTPDRAREAHMQMKAAALRNTSRKMFGMDGSVSNKEENTERHTVEDVNRDMHSLLGMRN.

The 125-residue stretch at 92–216 (WVYCDADGSQ…AIHPDHEHVL (125 aa)) folds into the RdRp catalytic domain. The segment covering 397–424 (GLNEKLKEKENQKEKEKEKQKEKEKDGA) has biased composition (basic and acidic residues). A disordered region spans residues 397–447 (GLNEKLKEKENQKEKEKEKQKEKEKDGASDGNDVSTSTKTGERDRDVNVGT).

This sequence belongs to the potyviridae genome polyprotein family. In terms of processing, genome polyprotein of potyviruses undergoes post-translational proteolytic processing by the main proteinase NIa-pro resulting in the production of at least ten individual proteins. The P1 proteinase and the HC-pro cleave only their respective C-termini autocatalytically. 6K1 is essential for proper proteolytic separation of P3 from CI.

Its subcellular location is the virion. It catalyses the reaction RNA(n) + a ribonucleoside 5'-triphosphate = RNA(n+1) + diphosphate. An RNA-dependent RNA polymerase that plays an essential role in the virus replication. Its function is as follows. Involved in aphid transmission, cell-to-cell and systemis movement, encapsidation of the viral RNA and in the regulation of viral RNA amplification. The protein is Genome polyprotein of Papaya ringspot virus (strain P / mutant HA 5-1).